The following is a 175-amino-acid chain: UPF0398 protein SPD_0338 (175 aa).

It belongs to the UPF0398 family.

The sequence is that of UPF0398 protein SPD_0338 from Streptococcus pneumoniae serotype 2 (strain D39 / NCTC 7466).